A 171-amino-acid chain; its full sequence is MNHFELFGLPPQFSLDGSLLSSQFRELQKRFHPDNFATASERDRLLAVQKAAQINDAYQVLKNPISRAEYLLSQNGLEIRGEQQTMQDPMFLMEQMELREELEEIPHGSDAESALAAFDARVSKMYKQHLATIEQELNDAQWPQAADRVRKLKFIAKLKNEIELVEEKLFG.

The region spanning 2-74 is the J domain; it reads NHFELFGLPP…ISRAEYLLSQ (73 aa).

This sequence belongs to the HscB family. In terms of assembly, interacts with HscA and stimulates its ATPase activity.

In terms of biological role, co-chaperone involved in the maturation of iron-sulfur cluster-containing proteins. Seems to help targeting proteins to be folded toward HscA. This is Co-chaperone protein HscB homolog from Vibrio vulnificus (strain CMCP6).